Reading from the N-terminus, the 657-residue chain is Probable cytochrome P450 556A1 (657 aa).

A helical membrane pass occupies residues 2–24; sequence FLTSILYTIIIILIFYKGLEYLI. Positions 440-486 are disordered; that stretch reads RSLPSINNNNNNNNNNNNNNNNNNNNNNNNNSNNNSINGNNKNNNRN. Residues 446-486 show a composition bias toward low complexity; the sequence is NNNNNNNNNNNNNNNNNNNNNNNNNSNNNSINGNNKNNNRN. A heme-binding site is contributed by Cys587.

It belongs to the cytochrome P450 family. It depends on heme as a cofactor.

It is found in the membrane. The sequence is that of Probable cytochrome P450 556A1 (cyp556A1) from Dictyostelium discoideum (Social amoeba).